Here is a 463-residue protein sequence, read N- to C-terminus: UDP-N-acetylmuramoyl-L-alanyl-D-glutamate--2,6-diaminopimelate ligase (463 aa).

Residue Thr-21 coordinates UDP-N-acetyl-alpha-D-muramoyl-L-alanyl-D-glutamate. 94–100 is a binding site for ATP; it reads GTNGKTT. Residues 137-138, Ser-164, Gln-170, and Arg-172 each bind UDP-N-acetyl-alpha-D-muramoyl-L-alanyl-D-glutamate; that span reads TT. Position 204 is an N6-carboxylysine (Lys-204). Meso-2,6-diaminopimelate contacts are provided by residues Arg-358, 382-385, Gly-433, and Glu-437; that span reads DNPR. Residues 382–385 carry the Meso-diaminopimelate recognition motif motif; that stretch reads DNPR.

It belongs to the MurCDEF family. MurE subfamily. Requires Mg(2+) as cofactor. Post-translationally, carboxylation is probably crucial for Mg(2+) binding and, consequently, for the gamma-phosphate positioning of ATP.

The protein resides in the cytoplasm. It carries out the reaction UDP-N-acetyl-alpha-D-muramoyl-L-alanyl-D-glutamate + meso-2,6-diaminopimelate + ATP = UDP-N-acetyl-alpha-D-muramoyl-L-alanyl-gamma-D-glutamyl-meso-2,6-diaminopimelate + ADP + phosphate + H(+). It participates in cell wall biogenesis; peptidoglycan biosynthesis. Catalyzes the addition of meso-diaminopimelic acid to the nucleotide precursor UDP-N-acetylmuramoyl-L-alanyl-D-glutamate (UMAG) in the biosynthesis of bacterial cell-wall peptidoglycan. In Helicobacter hepaticus (strain ATCC 51449 / 3B1), this protein is UDP-N-acetylmuramoyl-L-alanyl-D-glutamate--2,6-diaminopimelate ligase.